The chain runs to 502 residues: MSSSPHTHTLIIMERLSEVRLYSSPMTSVLNSNLSSCLTNAFIPDTVRMASSPLLAWMTLVVIGTLAPVSVFSCLSLKRSVKELLTERSSKLDVLDIFRFVAILWVMLNHTGSEGRIDILDRLPSADAFKSAMHDHPIFGALMGNSALGVEIFLVLSGLLAARSWLRKADEPFFQHWKSFIARRLLRLAPSMFIFVYIAAGPIMNALLPRYSSSMVSACGFWGILSHVTFTSNWQSTPTCMGYLWYLGLDMQLYMVAPIFLNLLHKFPKRGMALTITTIIASMVIRAGYCTAYGTCNQSDVDIPFISYPGQDAETLKSIYAGLWDMYSRPYTKCGPFLIGLLLGYITVSSKYIMVSTTSKTLFRSSLIVAIATIYAILPEYWNPNAGNTLYNTVYTAVFRSVFAMAISGMIAALYFRQEYRPTNPIFAMLAKLTYNAYLLHMPVVYIFNWLPFLQAATSPIHLLLVLPFVAILSFIAALIFYLFIEAPIGHLTSQYATRLGL.

11 consecutive transmembrane segments (helical) span residues 54-74, 92-112, 138-158, 188-208, 241-261, 272-292, 335-355, 367-387, 396-416, 437-457, and 465-485; these read LLAW…VFSC, LDVL…NHTG, IFGA…VLSG, LAPS…NALL, MGYL…PIFL, MALT…YCTA, GPFL…YIMV, LIVA…PNAG, TAVF…ALYF, AYLL…LQAA, and LVLP…YLFI.

Expressed in intestine, some sensory neurons in the head, body wall muscles and socket cells.

The protein resides in the endoplasmic reticulum membrane. In terms of biological role, involved in the response to variation in environmental oxygen levels by inhibiting hif-1-mediated gene transcription in a vhl-1-independent manner. Plays a role in susceptibility to killing mediated by P.aeruginosa and by pore-forming toxins produced by B.thuringiensis. Probably by preventing hif-1 transcriptional activity, regulates behavioral responses, such as locomotion speed following acute reoxygenation. Plays a role in normal egg-laying probably by regulating spermatogenesis and in body morphogenesis. This is Regulator of hypoxia-inducible factor 1 from Caenorhabditis elegans.